The sequence spans 358 residues: Chondroadherin (358 aa).

The first 20 residues, 1–20, serve as a signal peptide directing secretion; sequence MARVLLLSLVFLAILLPALA. The LRRNT domain occupies 21–50; that stretch reads ACPQNCHCHGDLQHVICDKVGLQKIPKVSE. A disulfide bond links Cys22 and Cys37. LRR repeat units lie at residues 51 to 72, 75 to 96, 99 to 120, 123 to 144, 147 to 168, 171 to 192, 195 to 216, 219 to 240, 244 to 265, and 268 to 289; these read TTKL…SFRT, NLVS…AFRG, QLIY…AFDD, ELTY…LLSP, NLFI…AFQG, DLRW…SLDD, NLAK…ALSK, VVEE…AFQS, YLET…AFAG, and TLKH…FPFD. Residue Ser143 is glycosylated (O-linked (GalNAc...) serine). Residues 299 to 347 enclose the LRRCT domain; that stretch reads NPWKCTCQLRGLRRWLEAKTSRPDATCSSPAKFKGQRIRDTDALRSCKS. 2 disulfide bridges follow: Cys303–Cys345 and Cys305–Cys325. The segment at 321–358 is disordered; that stretch reads PDATCSSPAKFKGQRIRDTDALRSCKSPTKRSKKAGRH. Over residues 348 to 358 the composition is skewed to basic residues; the sequence is PTKRSKKAGRH.

This sequence belongs to the small leucine-rich proteoglycan (SLRP) family. SLRP class IV subfamily. Mostly monomeric. In terms of tissue distribution, present in femoral head and rib cartilage, as well as in tendon. Detected in bone marrow.

It localises to the secreted. The protein localises to the extracellular space. It is found in the extracellular matrix. Functionally, promotes attachment of chondrocytes, fibroblasts, and osteoblasts. This binding is mediated (at least for chondrocytes and fibroblasts) by the integrin alpha(2)beta(1). May play an important role in the regulation of chondrocyte growth and proliferation. This Rattus norvegicus (Rat) protein is Chondroadherin (Chad).